A 357-amino-acid polypeptide reads, in one-letter code: Fluoren-9-ol dehydrogenase (357 aa).

Residues valine 36 to aspartate 67 and aspartate 87 contribute to the NADP(+) site. Catalysis depends on tyrosine 198, which acts as the Proton acceptor. Lysine 202 is an NADP(+) binding site.

The protein belongs to the short-chain dehydrogenases/reductases (SDR) family.

The enzyme catalyses 9H-fluoren-9-ol + NADP(+) = 9H-fluoren-9-one + NADPH + H(+). It carries out the reaction 9H-fluoren-9-ol + NAD(+) = 9H-fluoren-9-one + NADH + H(+). It functions in the pathway aromatic compound metabolism. Catalyzes the dehydrogenation of both 9-fluorenol and 1,1a-dihydroxy-1-hydro-9-fluorenone to produce 9-fluorenone and 2'-carboxy-2,3- dihydroxybiphenyl, respectively. The protein is Fluoren-9-ol dehydrogenase of Terrabacter sp. (strain DBF63).